We begin with the raw amino-acid sequence, 429 residues long: Glutamate dehydrogenase B (429 aa).

The tract at residues 1 to 20 is disordered; that stretch reads MAQTPPPESAPSTDSEPETA. Lys-119 is a catalytic residue.

This sequence belongs to the Glu/Leu/Phe/Val dehydrogenases family. Homohexamer.

The chain is Glutamate dehydrogenase B (gdhB) from Halobacterium salinarum (strain ATCC 700922 / JCM 11081 / NRC-1) (Halobacterium halobium).